Here is a 581-residue protein sequence, read N- to C-terminus: NADH-quinone oxidoreductase subunit C/D (581 aa).

The tract at residues 1-172 (MSAFELVTEL…PLFNMTASLF (172 aa)) is NADH dehydrogenase I subunit C. The segment at 196 to 581 (ELMILNYGPH…IDYVMSDVDR (386 aa)) is NADH dehydrogenase I subunit D.

This sequence in the N-terminal section; belongs to the complex I 30 kDa subunit family. It in the C-terminal section; belongs to the complex I 49 kDa subunit family. In terms of assembly, NDH-1 is composed of 13 different subunits. Subunits NuoB, CD, E, F, and G constitute the peripheral sector of the complex.

It is found in the cell inner membrane. The catalysed reaction is a quinone + NADH + 5 H(+)(in) = a quinol + NAD(+) + 4 H(+)(out). NDH-1 shuttles electrons from NADH, via FMN and iron-sulfur (Fe-S) centers, to quinones in the respiratory chain. The immediate electron acceptor for the enzyme in this species is believed to be ubiquinone. Couples the redox reaction to proton translocation (for every two electrons transferred, four hydrogen ions are translocated across the cytoplasmic membrane), and thus conserves the redox energy in a proton gradient. The sequence is that of NADH-quinone oxidoreductase subunit C/D from Rhodopseudomonas palustris (strain ATCC BAA-98 / CGA009).